A 327-amino-acid chain; its full sequence is DNA-directed RNA polymerase subunit alpha (327 aa).

The interval 1-233 (MVREKVKVST…NLFIPFLHVE (233 aa)) is alpha N-terminal domain (alpha-NTD). The interval 267 to 327 (LAFQYIFIDQ…KKILDILEKK (61 aa)) is alpha C-terminal domain (alpha-CTD).

The protein belongs to the RNA polymerase alpha chain family. As to quaternary structure, in plastids the minimal PEP RNA polymerase catalytic core is composed of four subunits: alpha, beta, beta', and beta''. When a (nuclear-encoded) sigma factor is associated with the core the holoenzyme is formed, which can initiate transcription.

Its subcellular location is the plastid. It is found in the chloroplast. The enzyme catalyses RNA(n) + a ribonucleoside 5'-triphosphate = RNA(n+1) + diphosphate. In terms of biological role, DNA-dependent RNA polymerase catalyzes the transcription of DNA into RNA using the four ribonucleoside triphosphates as substrates. This chain is DNA-directed RNA polymerase subunit alpha, found in Lepidium virginicum (Virginia pepperweed).